We begin with the raw amino-acid sequence, 401 residues long: Nodal homolog 3-A (401 aa).

Residues 1-18 (MAFLNLFFCLVFISPLMA) form the signal peptide. Positions 19–274 (MPPVLQGRKS…KVNGFRRLRR (256 aa)) are excised as a propeptide. Asn168, Asn337, Asn341, and Asn344 each carry an N-linked (GlcNAc...) asparagine glycan. 2 cysteine pairs are disulfide-bonded: Cys299–Cys365 and Cys328–Cys396.

This sequence belongs to the TGF-beta family. In terms of assembly, monomer. The propeptide region interacts with bmp4 in a non-covalent manner. In terms of tissue distribution, expressed in the epithelial layer of the Spemann organizer during gastrulation.

The protein resides in the secreted. In terms of biological role, exhibits mesoderm-dorsalizing activity and neural-inducing activity, but lacks mesoderm-inducing activity. Regulates the expression of specific mesodermal and neural genes. Induces convergent extension movements at the embryonic midline by activating the fgf signaling pathway to induce t/bra expression in the organizer region. Acts with wnt11 to induce Spemann organizer cells and induce axis formation. The unprocessed protein antagonizes bmp-signaling. This chain is Nodal homolog 3-A (nodal3-a), found in Xenopus laevis (African clawed frog).